A 39-amino-acid polypeptide reads, in one-letter code: Photosystem II reaction center protein L (39 aa).

Residues 18–38 (SLYLGLLFVFVTGVLMSSYFF) traverse the membrane as a helical segment.

The protein belongs to the PsbL family. In terms of assembly, PSII is composed of 1 copy each of membrane proteins PsbA, PsbB, PsbC, PsbD, PsbE, PsbF, PsbH, PsbI, PsbJ, PsbK, PsbL, PsbM, PsbT, PsbX, PsbY, PsbZ, Psb30/Ycf12, peripheral proteins PsbO, CyanoQ (PsbQ), PsbU, PsbV and a large number of cofactors. It forms dimeric complexes.

It is found in the cellular thylakoid membrane. One of the components of the core complex of photosystem II (PSII). PSII is a light-driven water:plastoquinone oxidoreductase that uses light energy to abstract electrons from H(2)O, generating O(2) and a proton gradient subsequently used for ATP formation. It consists of a core antenna complex that captures photons, and an electron transfer chain that converts photonic excitation into a charge separation. This subunit is found at the monomer-monomer interface and is required for correct PSII assembly and/or dimerization. This Synechococcus sp. (strain CC9902) protein is Photosystem II reaction center protein L.